The sequence spans 231 residues: uncharacterized protein (231 aa).

Position 10-34 (Val10–Val34) interacts with NADP(+). Ser140 lines the substrate pocket. Residue Tyr153 is the Proton acceptor of the active site.

This sequence belongs to the short-chain dehydrogenases/reductases (SDR) family.

This is an uncharacterized protein from Staphylococcus aureus (strain N315).